We begin with the raw amino-acid sequence, 671 residues long: UvrABC system protein C (671 aa).

Residues 16–95 (TTPGVYRFRD…IKEFKPRFNV (80 aa)) enclose the GIY-YIG domain. Residues 207–242 (KRFISRLEKDMAAAVAELDYERAAGLRDDIIALRKV) form the UVR domain.

It belongs to the UvrC family. As to quaternary structure, interacts with UvrB in an incision complex.

The protein localises to the cytoplasm. Functionally, the UvrABC repair system catalyzes the recognition and processing of DNA lesions. UvrC both incises the 5' and 3' sides of the lesion. The N-terminal half is responsible for the 3' incision and the C-terminal half is responsible for the 5' incision. This is UvrABC system protein C from Paenarthrobacter aurescens (strain TC1).